The following is a 105-amino-acid chain: Ig lambda chain C region (105 aa).

An Ig-like domain is found at 2–100 (PKAAPTVNLF…EGTIVEKTVT (99 aa)). An intrachain disulfide couples C27 to C86.

This is Ig lambda chain C region from Sus scrofa (Pig).